The chain runs to 934 residues: Protein translocase subunit SecA (934 aa).

Residues Gln87, 105–109 (GEGKT), and Asp515 contribute to the ATP site. Cys918, Cys920, Cys929, and His930 together coordinate Zn(2+).

It belongs to the SecA family. Monomer and homodimer. Part of the essential Sec protein translocation apparatus which comprises SecA, SecYEG and auxiliary proteins SecDF-YajC and YidC. It depends on Zn(2+) as a cofactor.

The protein resides in the cell inner membrane. It localises to the cytoplasm. It catalyses the reaction ATP + H2O + cellular proteinSide 1 = ADP + phosphate + cellular proteinSide 2.. Its function is as follows. Part of the Sec protein translocase complex. Interacts with the SecYEG preprotein conducting channel. Has a central role in coupling the hydrolysis of ATP to the transfer of proteins into and across the cell membrane, serving both as a receptor for the preprotein-SecB complex and as an ATP-driven molecular motor driving the stepwise translocation of polypeptide chains across the membrane. This chain is Protein translocase subunit SecA, found in Ralstonia pickettii (strain 12J).